The sequence spans 447 residues: F-box only protein 5 (447 aa).

A phosphoserine mark is found at Ser94 and Ser102. The tract at residues Ala135–Val244 is interaction with EVI5. One can recognise an F-box domain in the interval Leu250–Ser296. The sufficient for interaction with RPS6KA2; Prevents association of CDC20 with RPS6KA2 stretch occupies residues Thr261–Lys339. The requires for efficient binding to CDC20 stretch occupies residues Thr261–Cys409. Residues Asn305 to Leu447 are inhibits APC ubiquitin ligase activity. Positions Arg322–Leu325 are competitively blocks access of APC substrates to the D-box coreceptor formed by FZR1 and ANAPC10. Residues Leu337–Arg358 form a disordered region. A compositionally biased stretch (polar residues) spans Thr343–Ser357. The ZBR-type zinc-finger motif lies at Ser374–Gly422. The Zn(2+) site is built by Cys378, Cys381, Cys396, Cys401, Cys406, Cys409, His414, and Cys419. An allows a rapid multiple mono-ubiquitination of the APC substrate, but strongly inhibits the slow ubiquitin chain elongation catalyzed by UBCH10 region spans residues Cys378–Ser420. The tract at residues Thr437–Leu447 is sufficient to suppress UBE2S activity; essential for interaction with UBE2S; competitively inhibits the rapide ubiquitin chain elongation by UBE2D1 which blocks UBE2D1 with APC; indispensable for recruitment and position of FBXO5 to the catalytic site of APC; abrogates the inhibition of ubiquitin chain assembly primarily catalyzed by UBE2S; inhibits the ubiquitination by either UBE2C or UBE2D1.

In terms of assembly, part of a SCF (SKP1-cullin-F-box) protein ligase complex. Interacts with BTRC; mediates proteolysis by the SCF ubiquitin ligase complex leading to activation of APC in late mitosis and subsequent mitotic progression. Interacts with FZR1/CDH1 and the N-terminal substrate-binding domain of CDC20; prevents APC activation. Also interacts with EVI5 which blocks its phosphorylation by PLK1 and prevents its subsequent binding to BTRC and degradation. Interacts simultaneously with anaphase promoting complex (APC), through at least ANAPC2, CDC23, CDC27, the APC substrate GMNN and the APC activator FZR1. Interacts with UBE2S; interferes with the activity of UBE2S mainly by disrupting the dynamic electrostatic association between the C-terminal tail of UBE2S and ANAPC2. Interacts with RPS6KA2; cooperates to induce the metaphase arrest of early blastomeres; increases and stabilizes interaction of FBXO5 with CDC20. Post-translationally, phosphorylation by CDK2 and subsequently by PLK1 triggers degradation during early mitosis through ubiquitin-mediated proteolysis by the SCF ubiquitin ligase complex containing the F-box protein BTRC. This degradation is necessary for the activation of APC in late mitosis and subsequent mitotic progression. Phosphorylated by RPS6KA2; increases and stabilizes interaction with CDC20. In terms of processing, ubiquitinated by the SCF(BTRC) complex following phosphorylation by PLK1. Undergoes both 'Lys-11' and 'Lys-48'-linked polyubiquitination by APC-FZR1 complex leading to degradation by proteasome during G1 phase. Degraded through the SCF(BTRC) complex; degradation occurs during oocyte maturation, between germinal vesicle breakdown (GVBD) and meiosis I, and is required for the meiosis I-meiosis II transition.

The protein localises to the nucleus. The protein resides in the cytoplasm. It localises to the cytoskeleton. It is found in the spindle. The protein operates within protein modification; protein ubiquitination. Functionally, regulator of APC activity during mitotic and meiotic cell cycle. During mitotic cell cycle plays a role as both substrate and inhibitor of APC-FZR1 complex. During G1 phase, plays a role as substrate of APC-FZR1 complex E3 ligase. Then switches as an inhibitor of APC-FZR1 complex during S and G2 leading to cell-cycle commitment. As APC inhibitor, prevents the degradation of APC substrates at multiple levels: by interacting with APC and blocking access of APC substrates to the D-box coreceptor, formed by FZR1 and ANAPC10; by suppressing ubiquitin ligation and chain elongation by APC by preventing the UBE2C and UBE2S activities. Plays a role in genome integrity preservation by coordinating DNA replication with mitosis through APC inhibition in interphase to stabilize CCNA2 and GMNN in order to promote mitosis and prevent rereplication and DNA damage-induced cellular senescence. During oocyte maturation, plays a role in meiosis through inactivation of APC-FZR1 complex. Inhibits APC through RPS6KA2 interaction that increases FBXO5 affiniy for CDC20 leading to the metaphase arrest of the second meiotic division before fertilization. Controls entry into the first meiotic division through inactivation of APC-FZR1 complex. Promotes migration and osteogenic differentiation of mesenchymal stem cells. This is F-box only protein 5 from Homo sapiens (Human).